The primary structure comprises 230 residues: MKVLAIKLVDYREWTERLGYDREWLIQKIQNKFMMKIHEIASQYSTFPLQLRFDNLLMIVDGITNTQLIYMINDMQENLPVGIKTCLGYGKTPLEAQWNASVCLNNKEDKFKEYVDEKIAALHFDINFNTEALKYTSVYDSFLEITNIYVDLSRFLYKIGGILQYLGGDNYLGFVSTNSVNKVIEKFSDDNKIKVGIGIGQNARTAIKLATTSLEKIRNNREKTWHIEEE.

It belongs to the archaeal-type GTP cyclohydrolase family.

It carries out the reaction GTP + 3 H2O = 2-amino-5-formylamino-6-(5-phospho-D-ribosylamino)pyrimidin-4(3H)-one + 2 phosphate + 2 H(+). Catalyzes the formation of 2-amino-5-formylamino-6-ribofuranosylamino-4(3H)-pyrimidinone ribonucleotide monophosphate and inorganic phosphate from GTP. Also has an independent pyrophosphate phosphohydrolase activity. This chain is GTP cyclohydrolase III, found in Saccharolobus islandicus (strain M.16.27) (Sulfolobus islandicus).